A 586-amino-acid polypeptide reads, in one-letter code: Zinc finger protein Eos (586 aa).

Disordered regions lie at residues 1-42 (MHTP…APDF) and 68-98 (EKEF…SANS). The span at 25-34 (QGKDNLEREL) shows a compositional bias: basic and acidic residues. Residues 79–98 (SVSTPNSQHSSPSRSLSANS) show a composition bias toward polar residues. Residue lysine 100 forms a Glycyl lysine isopeptide (Lys-Gly) (interchain with G-Cter in SUMO2) linkage. Residue serine 105 is modified to Phosphoserine. 4 consecutive C2H2-type zinc fingers follow at residues 159–181 (LKCD…KRSH), 187–209 (FHCN…IKLH), 215–237 (FKCP…LRTH), and 248–271 (YKCN…ERCH). An interaction with FOXP3 region spans residues 281–586 (AQALTGQPGD…HIVRGEHKVG (306 aa)). Lysine 335 carries the N6-acetyllysine modification. A disordered region spans residues 413-490 (RLELPGSREA…QPPPTIVVGR (78 aa)). Positions 423–433 (GEGPEDLGDGG) match the CTBP-binding motif PEDLG motif. Positions 476–485 (QGPPPQPPPT) are enriched in pro residues. A Glycyl lysine isopeptide (Lys-Gly) (interchain with G-Cter in SUMO2) cross-link involves residue lysine 501. 2 C2H2-type zinc fingers span residues 531–553 (FKCE…MGCH) and 559–583 (FECN…RGEH).

The protein belongs to the Ikaros C2H2-type zinc-finger protein family. In terms of assembly, self-associates. Interacts with other family members; IKZF1, IKZF2, IKZF3 and IKZF5. Interacts with CTBP2, SPI1 and MITF. Interacts with FOXP3 and CTBP1. Expressed mainly in the brain. Up-regulated in long term cultured astrocytes. Down-regulated during osteoclast differentiation.

The protein localises to the nucleus. Its function is as follows. DNA-binding protein that binds to the 5'GGGAATRCC-3' Ikaros-binding sequence. Interacts with SPI1 and MITF to repress transcription of the CTSK and ACP5 promoters via recruitment of corepressors SIN3A and CTBP2. May be involved in the development of central and peripheral nervous systems. Essential for the inhibitory function of regulatory T-cells (Treg). Mediates FOXP3-mediated gene silencing in regulatory T-cells (Treg) via recruitment of corepressor CTBP1. The sequence is that of Zinc finger protein Eos (Ikzf4) from Mus musculus (Mouse).